We begin with the raw amino-acid sequence, 336 residues long: Cyclin-H1-1 (336 aa).

Ala-2 bears the N-acetylalanine mark. The disordered stretch occupies residues 297–336 (KSCLGHSSSHDESKKREKRSKHKSHRSSNDTPNGAPPPIG). Over residues 312 to 322 (REKRSKHKSHR) the composition is skewed to basic residues.

The protein belongs to the cyclin family. Interacts with CDKA-1, CDKD-2 and CDKD-3, but not CDKD-1 and CDKF-1.

It localises to the cytoplasm. It is found in the nucleus. In terms of biological role, associates with CDK-2 and CDK-3 and activates the CDK kinases. This Arabidopsis thaliana (Mouse-ear cress) protein is Cyclin-H1-1 (CYCH1-1).